We begin with the raw amino-acid sequence, 159 residues long: Ribose-5-phosphate isomerase B (159 aa).

D-ribulose 5-phosphate-binding positions include 8 to 9 (DH) and 67 to 71 (GSGNG). Glu72 (proton acceptor) is an active-site residue. The active-site Proton donor is His99. 4 residues coordinate D-ribulose 5-phosphate: Asn100, Arg110, Arg134, and Arg138.

Belongs to the LacAB/RpiB family. In terms of assembly, homodimer.

The enzyme catalyses aldehydo-D-ribose 5-phosphate = D-ribulose 5-phosphate. The protein operates within carbohydrate degradation; pentose phosphate pathway; D-ribose 5-phosphate from D-ribulose 5-phosphate (non-oxidative stage): step 1/1. Its function is as follows. Catalyzes the interconversion of ribulose-5-P and ribose-5-P. The protein is Ribose-5-phosphate isomerase B of Mycolicibacterium paratuberculosis (strain ATCC BAA-968 / K-10) (Mycobacterium paratuberculosis).